Reading from the N-terminus, the 518-residue chain is Glutamate--cysteine ligase (518 aa).

Belongs to the glutamate--cysteine ligase type 1 family. Type 1 subfamily.

The enzyme catalyses L-cysteine + L-glutamate + ATP = gamma-L-glutamyl-L-cysteine + ADP + phosphate + H(+). The protein operates within sulfur metabolism; glutathione biosynthesis; glutathione from L-cysteine and L-glutamate: step 1/2. The chain is Glutamate--cysteine ligase from Salmonella arizonae (strain ATCC BAA-731 / CDC346-86 / RSK2980).